Here is a 324-residue protein sequence, read N- to C-terminus: MGSNEQIHRDKLIIDTDPGIDDSMTILMAFRAPTVEIIGLTTIFGNTTTKNATQNALLLCERAGHPEVPVAEGSAEPLKGGEPRVADFVHGSDGLGNLFLPAPTSKKVDENAAEFMVNKVSQFPGEVSILALGPLTNVALAIKRDPSFASKVKKIVVLGGAFFAAGNVSPAAEANIYGDPEAADIVFTSGADVDVVGINITTQVCFTDEDLLELRNSKGKHAQFLCDMCQFYRDWHAESDGFHGIFLHDPVSFTALVHPEYFTFKKGVVRVETQGICTGHTLMDQGLKKWNSENPWSGYKPISVAWTVDVPNVLAFVKELLMAP.

Histidine 248 is an active-site residue.

Belongs to the IUNH family.

It localises to the cytoplasm. It catalyses the reaction uridine + H2O = D-ribose + uracil. Functionally, involved in pyrimidine breakdown. The polypeptide is Probable uridine nucleosidase 1 (URH1) (Oryza sativa subsp. japonica (Rice)).